A 216-amino-acid polypeptide reads, in one-letter code: ATP phosphoribosyltransferase (216 aa).

Belongs to the ATP phosphoribosyltransferase family. Short subfamily. As to quaternary structure, heteromultimer composed of HisG and HisZ subunits.

It is found in the cytoplasm. The enzyme catalyses 1-(5-phospho-beta-D-ribosyl)-ATP + diphosphate = 5-phospho-alpha-D-ribose 1-diphosphate + ATP. Its pathway is amino-acid biosynthesis; L-histidine biosynthesis; L-histidine from 5-phospho-alpha-D-ribose 1-diphosphate: step 1/9. Functionally, catalyzes the condensation of ATP and 5-phosphoribose 1-diphosphate to form N'-(5'-phosphoribosyl)-ATP (PR-ATP). Has a crucial role in the pathway because the rate of histidine biosynthesis seems to be controlled primarily by regulation of HisG enzymatic activity. In Prochlorococcus marinus (strain MIT 9211), this protein is ATP phosphoribosyltransferase.